The following is a 105-amino-acid chain: Molt-inhibiting hormone (105 aa).

Positions 1 to 28 (MYRLAMRTWLAIVIVVVGTSLLFDTASA) are cleaved as a signal peptide. Intrachain disulfides connect Cys-35-Cys-72, Cys-52-Cys-68, and Cys-55-Cys-81.

Belongs to the arthropod CHH/MIH/GIH/VIH hormone family. In terms of tissue distribution, produced by the medulla terminalis X-organ in the eyestalks and transported to the sinus gland where it is stored and released.

The protein localises to the secreted. Its function is as follows. Inhibits Y-organs where molting hormone (ecdysteroid) is secreted. A molting cycle is initiated when MIH secretion diminishes or stops. Has little or no hyperglycemic activity. This is Molt-inhibiting hormone from Penaeus japonicus (Kuruma prawn).